The chain runs to 270 residues: Probable septum site-determining protein MinC (270 aa).

The disordered stretch occupies residues 105 to 129; sequence DRRAPSSKAADEAPVQQAEPAAPAA. Low complexity predominate over residues 116–129; sequence EAPVQQAEPAAPAA.

The protein belongs to the MinC family. In terms of assembly, interacts with MinD and FtsZ.

Its function is as follows. Cell division inhibitor that blocks the formation of polar Z ring septums. Rapidly oscillates between the poles of the cell to destabilize FtsZ filaments that have formed before they mature into polar Z rings. Prevents FtsZ polymerization. The protein is Probable septum site-determining protein MinC of Burkholderia pseudomallei (strain 668).